A 338-amino-acid chain; its full sequence is Glycerol-3-phosphate dehydrogenase [NAD(P)+] (338 aa).

The NADPH site is built by serine 11, tryptophan 12, histidine 32, histidine 33, and lysine 109. Sn-glycerol 3-phosphate is bound by residues lysine 109, glycine 140, and serine 142. Residue alanine 144 coordinates NADPH. The sn-glycerol 3-phosphate site is built by lysine 195, aspartate 248, serine 258, arginine 259, and asparagine 260. Catalysis depends on lysine 195, which acts as the Proton acceptor. Arginine 259 serves as a coordination point for NADPH. The NADPH site is built by valine 283 and glutamate 285.

This sequence belongs to the NAD-dependent glycerol-3-phosphate dehydrogenase family.

It localises to the cytoplasm. It carries out the reaction sn-glycerol 3-phosphate + NAD(+) = dihydroxyacetone phosphate + NADH + H(+). The catalysed reaction is sn-glycerol 3-phosphate + NADP(+) = dihydroxyacetone phosphate + NADPH + H(+). It participates in membrane lipid metabolism; glycerophospholipid metabolism. In terms of biological role, catalyzes the reduction of the glycolytic intermediate dihydroxyacetone phosphate (DHAP) to sn-glycerol 3-phosphate (G3P), the key precursor for phospholipid synthesis. This Leuconostoc citreum (strain KM20) protein is Glycerol-3-phosphate dehydrogenase [NAD(P)+].